Consider the following 344-residue polypeptide: Anthranilate phosphoribosyltransferase (344 aa).

Residues Gly80, 83–84, Thr88, 90–93, 108–116, and Ser120 contribute to the 5-phospho-alpha-D-ribose 1-diphosphate site; these read GD, NIST, and KHGNRSVSS. Gly80 contributes to the anthranilate binding site. Ser92 contributes to the Mg(2+) binding site. Residue Asn111 participates in anthranilate binding. Anthranilate is bound at residue Arg166. Mg(2+)-binding residues include Asp225 and Glu226.

Belongs to the anthranilate phosphoribosyltransferase family. In terms of assembly, homodimer. Requires Mg(2+) as cofactor.

The catalysed reaction is N-(5-phospho-beta-D-ribosyl)anthranilate + diphosphate = 5-phospho-alpha-D-ribose 1-diphosphate + anthranilate. The protein operates within amino-acid biosynthesis; L-tryptophan biosynthesis; L-tryptophan from chorismate: step 2/5. Its function is as follows. Catalyzes the transfer of the phosphoribosyl group of 5-phosphorylribose-1-pyrophosphate (PRPP) to anthranilate to yield N-(5'-phosphoribosyl)-anthranilate (PRA). This Petrotoga mobilis (strain DSM 10674 / SJ95) protein is Anthranilate phosphoribosyltransferase.